The sequence spans 535 residues: MSLSRSEEMHRLTENVYKTIMEQFNPSLRNFIAMGKNYEKALAGVTFAAKGYFDALVKMGELASESQGSKELGDVLFQMAEVHRQIQNQLEETLKSFHNELLTQLEQKVELDSRYLSAALKKYQTEQRSKGDALDKCQAELKKLRKKSQGSKNPQKYSDKELQYIDAISNKQGELENYVSDGYKTALTEERRRFCFLVEKQCAVAKNSAAYHSKGKELLAQKLPLWQQACADPNKIPDRAVQLMQQMANSNGSILPSALSASKSNLVISDPIPGAKPLPVPPELAPFVGRMSAQENVPVMNGVAGPDSEDYNPWADRKAAQPKSLSPPQSQSKLSDSYSNTLPVRKSVTPKNSYATTENKTLPRSSSMAAGLERNGRMRVKAIFSHAAGDNSTLLSFKEGDLITLLVPEARDGWHYGESEKTKMRGWFPFSYTRVLDSDGSDRLHMSLQQGKSSSTGNLLDKDDLALPPPDYGTSSRAFPTQTAGTFKQRPYSVAVPAFSQGLDDYGARSVSRNPFANVHLKPTVTNDRSAPLLS.

The IMD domain occupies 1-250 (MSLSRSEEMH…VQLMQQMANS (250 aa)). The stretch at 88–153 (NQLEETLKSF…LRKKSQGSKN (66 aa)) forms a coiled coil. Phosphoserine occurs at positions 262, 324, 326, and 337. Positions 299–370 (VMNGVAGPDS…TLPRSSSMAA (72 aa)) are disordered. Residues 321–335 (QPKSLSPPQSQSKLS) are compositionally biased toward low complexity. The residue at position 341 (threonine 341) is a Phosphothreonine. Serine 347 is subject to Phosphoserine. Residues 349–368 (TPKNSYATTENKTLPRSSSM) show a composition bias toward polar residues. Threonine 361 carries the post-translational modification Phosphothreonine. 4 positions are modified to phosphoserine: serine 367, serine 385, serine 396, and serine 455. The 64-residue stretch at 375-438 (NGRMRVKAIF…PFSYTRVLDS (64 aa)) folds into the SH3 domain. The interval 445–477 (HMSLQQGKSSSTGNLLDKDDLALPPPDYGTSSR) is disordered. Polar residues predominate over residues 447–458 (SLQQGKSSSTGN).

Homodimer. Interacts with CDC42 and RAC1 that have been activated by GTP binding. Binds DIAPH1. Interacts with ATN1, ADGRB1, SHANK1, SHANK2, SHANK3, TIAM1, WASF1 and WASF2. Interacts with ENAH after recruitment of CDC42. Interacts with EPS8. Post-translationally, phosphorylated on tyrosine residues by INSR in response to insulin treatment. As to expression, detected in liver, brain, olfactory bulb, brain cortex, caudate putamen, hypothalamus and cerebellum.

Its subcellular location is the cytoplasm. It localises to the membrane. It is found in the cell projection. The protein resides in the filopodium. The protein localises to the ruffle. Its subcellular location is the cytoskeleton. Adapter protein that links membrane-bound small G-proteins to cytoplasmic effector proteins. Necessary for CDC42-mediated reorganization of the actin cytoskeleton and for RAC1-mediated membrane ruffling. Involved in the regulation of the actin cytoskeleton by WASF family members and the Arp2/3 complex. Plays a role in neurite growth. Acts syngeristically with ENAH to promote filipodia formation. Plays a role in the reorganization of the actin cytoskeleton in response to bacterial infection. Participates in actin bundling when associated with EPS8, promoting filopodial protrusions. This chain is BAR/IMD domain-containing adapter protein 2 (Baiap2), found in Mus musculus (Mouse).